The following is a 375-amino-acid chain: CCN family member 1 (375 aa).

The signal sequence occupies residues 1–22 (MGSAGARPALAAALLCLARLAL). Residues 23 to 94 (GSPCPAVCQC…AATNGICRAQ (72 aa)) enclose the IGFBP N-terminal domain. 6 cysteine pairs are disulfide-bonded: Cys-26–Cys-50, Cys-30–Cys-52, Cys-32–Cys-53, Cys-39–Cys-56, Cys-64–Cys-78, and Cys-70–Cys-91. One can recognise a VWFC domain in the interval 98–164 (RPCEYNSKIY…GQCCEEWVCD (67 aa)). One can recognise a TSP type-1 domain in the interval 223-268 (KCIVQTTSWSQCSKTCGTGISTRVTNDNPDCKLIKETRICEVRPCG). The heparin-binding stretch occupies residues 274-310 (SLKKGKKCTKTKKSPSPVRFTYAGCSSVKKYRPKYCG). 5 disulfides stabilise this stretch: Cys-281/Cys-318, Cys-298/Cys-332, Cys-309/Cys-348, Cys-312/Cys-350, and Cys-317/Cys-354. Residues 281–355 (CTKTKKSPSP…QSCRCNYNCP (75 aa)) enclose the CTCK domain.

This sequence belongs to the CCN family.

The protein localises to the secreted. Functionally, probable secreted regulatory protein. This chain is CCN family member 1 (CCN1), found in Gallus gallus (Chicken).